A 225-amino-acid chain; its full sequence is Protein-L-isoaspartate O-methyltransferase (225 aa).

S75 is an active-site residue.

It belongs to the methyltransferase superfamily. L-isoaspartyl/D-aspartyl protein methyltransferase family.

The protein resides in the cytoplasm. It carries out the reaction [protein]-L-isoaspartate + S-adenosyl-L-methionine = [protein]-L-isoaspartate alpha-methyl ester + S-adenosyl-L-homocysteine. In terms of biological role, catalyzes the methyl esterification of L-isoaspartyl residues in peptides and proteins that result from spontaneous decomposition of normal L-aspartyl and L-asparaginyl residues. It plays a role in the repair and/or degradation of damaged proteins. The polypeptide is Protein-L-isoaspartate O-methyltransferase (Xylella fastidiosa (strain M23)).